The chain runs to 285 residues: Prephenate dehydratase (285 aa).

Residues 2-183 (KVGYLGPAAT…NHTRFVILSP (182 aa)) form the Prephenate dehydratase domain. One can recognise an ACT domain in the interval 204 to 281 (MVMLPQDDQS…CKVRLLGAYQ (78 aa)).

The enzyme catalyses prephenate + H(+) = 3-phenylpyruvate + CO2 + H2O. It functions in the pathway amino-acid biosynthesis; L-phenylalanine biosynthesis; phenylpyruvate from prephenate: step 1/1. This Bacillus subtilis (strain 168) protein is Prephenate dehydratase (pheA).